The chain runs to 937 residues: Protein Niban 1 (937 aa).

Residue Gly-2 is the site of N-myristoyl glycine attachment. A phosphoserine mark is found at Ser-578, Ser-581, Ser-595, Ser-601, and Ser-646. The segment covering Asp-584 to Ser-595 has biased composition (polar residues). 2 disordered regions span residues Asp-584–Arg-710 and Ser-724–Asn-891. Low complexity predominate over residues Ala-640–Glu-651. Over residues Val-655–Leu-681 the composition is skewed to polar residues. Residues Glu-688–Glu-701 are compositionally biased toward basic and acidic residues. Phosphoserine occurs at positions 708 and 768. 2 stretches are compositionally biased toward polar residues: residues Pro-802–Cys-817 and Val-855–Pro-869.

The protein belongs to the Niban family. Detected in brain, lung, spleen and skeletal muscle. Expressed in small renal tumors but not in normal kidney.

It is found in the cytoplasm. The protein localises to the membrane. Its function is as follows. Regulates phosphorylation of a number of proteins involved in translation regulation including EIF2A, EIF4EBP1 and RPS6KB1. May be involved in the endoplasmic reticulum stress response. The chain is Protein Niban 1 from Rattus norvegicus (Rat).